A 143-amino-acid polypeptide reads, in one-letter code: Alpha-amylase/trypsin inhibitor CM16 (143 aa).

Residues 1 to 24 (MASKSNCVLLLAAVLVSIFAAVAA) form the signal peptide.

It belongs to the protease inhibitor I6 (cereal trypsin/alpha-amylase inhibitor) family. In terms of assembly, subunit of the tetrameric inhibitor. In terms of processing, five disulfide bonds, which are essential for the inhibitor activity, are probably present. As to expression, developing endosperm.

It localises to the secreted. In terms of biological role, alpha-amylase/trypsin inhibitor. It could be involved in insect defense mechanisms. In Triticum aestivum (Wheat), this protein is Alpha-amylase/trypsin inhibitor CM16.